A 723-amino-acid chain; its full sequence is Aspartate--tRNA(Asp/Asn) ligase 1 (723 aa).

Glu206 contributes to the L-aspartate binding site. The tract at residues 230 to 233 is aspartate; the sequence is QLFK. Arg252 provides a ligand contact to L-aspartate. ATP-binding positions include 252 to 254 and Gln261; that span reads RDE. Residue His481 coordinates L-aspartate. Glu516 lines the ATP pocket. Arg523 is a binding site for L-aspartate. 568 to 571 is an ATP binding site; that stretch reads GMDR.

Belongs to the class-II aminoacyl-tRNA synthetase family. Type 1 subfamily. In terms of assembly, homodimer.

The protein localises to the cytoplasm. It catalyses the reaction tRNA(Asx) + L-aspartate + ATP = L-aspartyl-tRNA(Asx) + AMP + diphosphate. Its function is as follows. Aspartyl-tRNA synthetase with relaxed tRNA specificity since it is able to aspartylate not only its cognate tRNA(Asp) but also tRNA(Asn). Reaction proceeds in two steps: L-aspartate is first activated by ATP to form Asp-AMP and then transferred to the acceptor end of tRNA(Asp/Asn). This chain is Aspartate--tRNA(Asp/Asn) ligase 1, found in Syntrophus aciditrophicus (strain SB).